We begin with the raw amino-acid sequence, 370 residues long: Protein SUPPRESSOR OF NIM1 1 (370 aa).

The F-box domain maps to 1-43 (MALPWELEEDILSRLPPISLVRFRTVSKHWNSLFNDKTFINNH).

Ubiquitous, at low levels.

Its function is as follows. Negatively regulates a plant defense signaling pathway which is independent of salicylic acid (SA) and systemic acquired resistance (SAR). Confers sensitivity to P.syringae and P.parasitica. In Arabidopsis thaliana (Mouse-ear cress), this protein is Protein SUPPRESSOR OF NIM1 1 (SON1).